Consider the following 427-residue polypeptide: Imidazolonepropionase (427 aa).

Fe(3+) contacts are provided by H81 and H83. 2 residues coordinate Zn(2+): H81 and H83. 4-imidazolone-5-propanoate is bound by residues R90, Y153, and H186. N-formimidoyl-L-glutamate is bound at residue Y153. H260 is a binding site for Fe(3+). H260 contributes to the Zn(2+) binding site. E263 is a 4-imidazolone-5-propanoate binding site. Residue D335 participates in Fe(3+) binding. Position 335 (D335) interacts with Zn(2+). N337 and G339 together coordinate N-formimidoyl-L-glutamate. A 4-imidazolone-5-propanoate-binding site is contributed by S340.

This sequence belongs to the metallo-dependent hydrolases superfamily. HutI family. Zn(2+) is required as a cofactor. It depends on Fe(3+) as a cofactor.

It localises to the cytoplasm. It catalyses the reaction 4-imidazolone-5-propanoate + H2O = N-formimidoyl-L-glutamate. The protein operates within amino-acid degradation; L-histidine degradation into L-glutamate; N-formimidoyl-L-glutamate from L-histidine: step 3/3. Functionally, catalyzes the hydrolytic cleavage of the carbon-nitrogen bond in imidazolone-5-propanoate to yield N-formimidoyl-L-glutamate. It is the third step in the universal histidine degradation pathway. The sequence is that of Imidazolonepropionase from Chloroflexus aggregans (strain MD-66 / DSM 9485).